The sequence spans 732 residues: Bromodomain-containing factor 1 (732 aa).

The segment covering 1-22 has biased composition (polar residues); the sequence is MSETFPETNTPVQTPSTESFVN. 5 disordered regions span residues 1 to 207, 324 to 380, 491 to 517, 556 to 600, and 700 to 732; these read MSET…NLPE, TNVA…ETKP, NKPVPEPTPQNSDVSDREYSSEEEDNV, REQQ…TPPQ, and VNGQQGSDNGFMKVVNQEESSEDEASSESSEEE. Positions 37-51 are enriched in low complexity; the sequence is SQDSDSNQQSSHQEP. Polar residues predominate over residues 89–100; it reads ASQTGVIQTEVS. Positions 137 to 147 are enriched in acidic residues; the sequence is EAPEENPQEEV. Residues 206-315 enclose the Bromo 1 domain; sequence PENPIPQHQA…AQFEKLMVKV (110 aa). A compositionally biased stretch (polar residues) spans 327–338; the sequence is AEATSVATSPTT. Residues 370-380 show a composition bias toward basic and acidic residues; that stretch reads KSKELPYETKP. One can recognise a Bromo 2 domain in the interval 383-492; that stretch reads KKVAAELRFC…AVFDKKWANK (110 aa). Residues 529–569 are a coiled coil; it reads AIQVMENQIIRMRKELDELKKEHLKKLREQQAARKKKKQQK. Positions 561–579 are enriched in basic residues; the sequence is ARKKKKQQKGKRRAPKAKH. Pro residues predominate over residues 590 to 600; sequence PPEPPKLTPPQ. Residues 593 to 672 enclose the NET domain; sequence PPKLTPPQPV…GDKALKNSAG (80 aa). A compositionally biased stretch (acidic residues) spans 718 to 732; sequence ESSEDEASSESSEEE.

Belongs to the BET family.

It localises to the nucleus. Functionally, transcription factor involved in the expression of a broad class of genes including snRNAs. Required for sporulation and DNA-damage repair. Prevents the spreading of SIR silencing at telomeres and protects histone H4, but not H3, from deacetylation. In Candida albicans (strain SC5314 / ATCC MYA-2876) (Yeast), this protein is Bromodomain-containing factor 1 (BDF1).